The sequence spans 67 residues: Beta-defensin 123 (67 aa).

A signal peptide spans 1–20 (MKLLLLTLTVLLLLSQLTPG). Disulfide bonds link cysteine 25-cysteine 52, cysteine 32-cysteine 46, and cysteine 36-cysteine 53.

The protein belongs to the beta-defensin family.

It localises to the secreted. In terms of biological role, has antibacterial activity. The chain is Beta-defensin 123 (DEFB123) from Gorilla gorilla gorilla (Western lowland gorilla).